A 428-amino-acid polypeptide reads, in one-letter code: Peptidase B (428 aa).

2 residues coordinate Mn(2+): lysine 195 and aspartate 200. The active site involves lysine 207. Aspartate 218, aspartate 277, and glutamate 279 together coordinate Mn(2+). The active site involves arginine 281.

This sequence belongs to the peptidase M17 family. In terms of assembly, homohexamer. The cofactor is Mn(2+).

The protein localises to the cytoplasm. It carries out the reaction Release of an N-terminal amino acid, Xaa, from a peptide or arylamide. Xaa is preferably Glu or Asp but may be other amino acids, including Leu, Met, His, Cys and Gln.. Functionally, probably plays an important role in intracellular peptide degradation. This chain is Peptidase B, found in Klebsiella pneumoniae (strain 342).